The primary structure comprises 190 residues: Putative 3-methyladenine DNA glycosylase (190 aa).

Belongs to the DNA glycosylase MPG family.

This Deinococcus radiodurans (strain ATCC 13939 / DSM 20539 / JCM 16871 / CCUG 27074 / LMG 4051 / NBRC 15346 / NCIMB 9279 / VKM B-1422 / R1) protein is Putative 3-methyladenine DNA glycosylase.